Consider the following 647-residue polypeptide: ATP-dependent zinc metalloprotease FtsH (647 aa).

Residues 1 to 33 form a disordered region; the sequence is MARKSDEDTNPMDKFMDRLRGSPGDGGPGRPDP. The Cytoplasmic portion of the chain corresponds to 1–39; sequence MARKSDEDTNPMDKFMDRLRGSPGDGGPGRPDPSQRKVH. Residues 40–60 traverse the membrane as a helical segment; the sequence is FSIWYFILALLLIVWMQTYMG. The Periplasmic segment spans residues 61 to 134; the sequence is EQQSEKISYS…RFSGDVQNPW (74 aa). A helical transmembrane segment spans residues 135–155; that stretch reads LGLITWWLLPFAIMIFFWSFL. At 156 to 647 the chain is on the cytoplasmic side; sequence MRRMGGGPQG…DPVQVEGGAA (492 aa). Residue 227–234 coordinates ATP; that stretch reads GAPGTGKT. H449 is a Zn(2+) binding site. The active site involves E450. Zn(2+) is bound by residues H453 and D526.

The protein in the central section; belongs to the AAA ATPase family. In the C-terminal section; belongs to the peptidase M41 family. Homohexamer. Zn(2+) serves as cofactor.

It is found in the cell inner membrane. Functionally, acts as a processive, ATP-dependent zinc metallopeptidase for both cytoplasmic and membrane proteins. Plays a role in the quality control of integral membrane proteins. This chain is ATP-dependent zinc metalloprotease FtsH, found in Syntrophobacter fumaroxidans (strain DSM 10017 / MPOB).